A 366-amino-acid polypeptide reads, in one-letter code: Isopentenyl-diphosphate delta-isomerase (366 aa).

Substrate is bound at residue 6–7; the sequence is RK. FMN contacts are provided by residues T63, 64 to 66, S94, and N123; that span reads GMT. Residue 94–96 coordinates substrate; sequence SQR. Q158 serves as a coordination point for substrate. E159 serves as a coordination point for Mg(2+). Residues K191, S216, T221, 273–275, and 294–295 contribute to the FMN site; these read GIR and AN.

Belongs to the IPP isomerase type 2 family. As to quaternary structure, homooctamer. Dimer of tetramers. FMN serves as cofactor. The cofactor is NADPH. Mg(2+) is required as a cofactor.

It localises to the cytoplasm. The enzyme catalyses isopentenyl diphosphate = dimethylallyl diphosphate. Its function is as follows. Involved in the biosynthesis of isoprenoids. Catalyzes the 1,3-allylic rearrangement of the homoallylic substrate isopentenyl (IPP) to its allylic isomer, dimethylallyl diphosphate (DMAPP). This chain is Isopentenyl-diphosphate delta-isomerase, found in Metallosphaera sedula (strain ATCC 51363 / DSM 5348 / JCM 9185 / NBRC 15509 / TH2).